A 621-amino-acid chain; its full sequence is DNA mismatch repair protein MutL (621 aa).

It belongs to the DNA mismatch repair MutL/HexB family.

In terms of biological role, this protein is involved in the repair of mismatches in DNA. It is required for dam-dependent methyl-directed DNA mismatch repair. May act as a 'molecular matchmaker', a protein that promotes the formation of a stable complex between two or more DNA-binding proteins in an ATP-dependent manner without itself being part of a final effector complex. This Petrotoga mobilis (strain DSM 10674 / SJ95) protein is DNA mismatch repair protein MutL.